A 346-amino-acid chain; its full sequence is Biotin synthase (346 aa).

The 219-residue stretch at 38–256 (RQVQVSTLLS…IAVARIMMPT (219 aa)) folds into the Radical SAM core domain. Residues C53, C57, and C60 each coordinate [4Fe-4S] cluster. Residues C97, C128, C188, and R260 each coordinate [2Fe-2S] cluster.

This sequence belongs to the radical SAM superfamily. Biotin synthase family. As to quaternary structure, homodimer. It depends on [4Fe-4S] cluster as a cofactor. The cofactor is [2Fe-2S] cluster.

The catalysed reaction is (4R,5S)-dethiobiotin + (sulfur carrier)-SH + 2 reduced [2Fe-2S]-[ferredoxin] + 2 S-adenosyl-L-methionine = (sulfur carrier)-H + biotin + 2 5'-deoxyadenosine + 2 L-methionine + 2 oxidized [2Fe-2S]-[ferredoxin]. Its pathway is cofactor biosynthesis; biotin biosynthesis; biotin from 7,8-diaminononanoate: step 2/2. In terms of biological role, catalyzes the conversion of dethiobiotin (DTB) to biotin by the insertion of a sulfur atom into dethiobiotin via a radical-based mechanism. This is Biotin synthase from Cronobacter sakazakii (strain ATCC BAA-894) (Enterobacter sakazakii).